The chain runs to 769 residues: Portal protein (769 aa).

Positions 458-479 (LEGYVNNLFKTIEGLKDVNSDL) are putative leucine zipper motif. Disordered regions lie at residues 654 to 675 (RGPR…DDER) and 750 to 769 (RQLT…DRRS). A compositionally biased stretch (basic and acidic residues) spans 760 to 769 (VGCERRDRRS).

It belongs to the herpesviridae portal protein family. Homododecamerizes. Interacts with terminase subunits TRM1 and TRM3.

It is found in the virion. The protein resides in the host nucleus. In terms of biological role, forms a portal in the viral capsid through which viral DNA is translocated during DNA packaging. Assembles as a dodecamer at a single fivefold axe of the T=16 icosahedric capsid. Binds to the molecular motor that translocates the viral DNA, termed terminase. The protein is Portal protein (54) of Homo sapiens (Human).